A 449-amino-acid chain; its full sequence is 4-aminobutyrate aminotransferase (449 aa).

Lys294 carries the N6-(pyridoxal phosphate)lysine modification.

The protein belongs to the class-III pyridoxal-phosphate-dependent aminotransferase family. It depends on pyridoxal 5'-phosphate as a cofactor.

The enzyme catalyses 4-aminobutanoate + 2-oxoglutarate = succinate semialdehyde + L-glutamate. It carries out the reaction (S)-3-amino-2-methylpropanoate + 2-oxoglutarate = 2-methyl-3-oxopropanoate + L-glutamate. The protein operates within amino-acid degradation; 4-aminobutanoate degradation. This chain is 4-aminobutyrate aminotransferase (gabT), found in Mycobacterium bovis (strain ATCC BAA-935 / AF2122/97).